Here is a 78-residue protein sequence, read N- to C-terminus: Putative membrane protein insertion efficiency factor (78 aa).

Belongs to the UPF0161 family.

Its subcellular location is the cell inner membrane. Functionally, could be involved in insertion of integral membrane proteins into the membrane. In Prochlorococcus marinus subsp. pastoris (strain CCMP1986 / NIES-2087 / MED4), this protein is Putative membrane protein insertion efficiency factor.